Here is a 350-residue protein sequence, read N- to C-terminus: Tetraacyldisaccharide 4'-kinase (350 aa).

49–56 (TTGGTGKT) is a binding site for ATP.

The protein belongs to the LpxK family.

It catalyses the reaction a lipid A disaccharide + ATP = a lipid IVA + ADP + H(+). Its pathway is glycolipid biosynthesis; lipid IV(A) biosynthesis; lipid IV(A) from (3R)-3-hydroxytetradecanoyl-[acyl-carrier-protein] and UDP-N-acetyl-alpha-D-glucosamine: step 6/6. Functionally, transfers the gamma-phosphate of ATP to the 4'-position of a tetraacyldisaccharide 1-phosphate intermediate (termed DS-1-P) to form tetraacyldisaccharide 1,4'-bis-phosphate (lipid IVA). This chain is Tetraacyldisaccharide 4'-kinase, found in Chlorobaculum tepidum (strain ATCC 49652 / DSM 12025 / NBRC 103806 / TLS) (Chlorobium tepidum).